The chain runs to 474 residues: NADH-ubiquinone oxidoreductase chain 4 (474 aa).

A run of 13 helical transmembrane segments spans residues 34–54 (SFFL…DLMF), 86–106 (LYGL…ISTV), 115–135 (LKFY…IKCS), 137–157 (LIAF…VVFF), 167–187 (AVIY…LACL), 211–231 (AMTI…IWPL), 242–262 (ASTG…LFGF), 276–295 (TFFL…NMWS), 302–322 (LVAY…LKGD), 325–345 (LIAY…LMFF), 373–393 (ALAI…LKFV), 405–425 (VSWP…LIGF), and 454–474 (YIIF…FLMI).

Belongs to the complex I subunit 4 family.

The protein localises to the mitochondrion membrane. The enzyme catalyses a ubiquinone + NADH + 5 H(+)(in) = a ubiquinol + NAD(+) + 4 H(+)(out). Core subunit of the mitochondrial membrane respiratory chain NADH dehydrogenase (Complex I) that is believed to belong to the minimal assembly required for catalysis. Complex I functions in the transfer of electrons from NADH to the respiratory chain. The immediate electron acceptor for the enzyme is believed to be ubiquinone. The polypeptide is NADH-ubiquinone oxidoreductase chain 4 (ND4) (Paramecium tetraurelia).